Reading from the N-terminus, the 466-residue chain is ATP synthase subunit beta (466 aa).

ATP is bound at residue 148 to 155 (GGAGVGKT).

Belongs to the ATPase alpha/beta chains family. As to quaternary structure, F-type ATPases have 2 components, CF(1) - the catalytic core - and CF(0) - the membrane proton channel. CF(1) has five subunits: alpha(3), beta(3), gamma(1), delta(1), epsilon(1). CF(0) has three main subunits: a(1), b(2) and c(9-12). The alpha and beta chains form an alternating ring which encloses part of the gamma chain. CF(1) is attached to CF(0) by a central stalk formed by the gamma and epsilon chains, while a peripheral stalk is formed by the delta and b chains.

It is found in the cell inner membrane. It catalyses the reaction ATP + H2O + 4 H(+)(in) = ADP + phosphate + 5 H(+)(out). Its function is as follows. Produces ATP from ADP in the presence of a proton gradient across the membrane. The catalytic sites are hosted primarily by the beta subunits. This chain is ATP synthase subunit beta, found in Herminiimonas arsenicoxydans.